The chain runs to 482 residues: tRNA sulfurtransferase (482 aa).

The THUMP domain maps to 61–165 (EQAIEALACI…GEELFIVSAI (105 aa)). ATP is bound by residues 183–184 (LI), Lys-265, Gly-287, and Gln-296. Cysteines 344 and 456 form a disulfide. One can recognise a Rhodanese domain in the interval 404 to 482 (SGDNEVILDI…GFANVKVYRP (79 aa)). Cys-456 serves as the catalytic Cysteine persulfide intermediate.

The protein belongs to the ThiI family.

Its subcellular location is the cytoplasm. It catalyses the reaction [ThiI sulfur-carrier protein]-S-sulfanyl-L-cysteine + a uridine in tRNA + 2 reduced [2Fe-2S]-[ferredoxin] + ATP + H(+) = [ThiI sulfur-carrier protein]-L-cysteine + a 4-thiouridine in tRNA + 2 oxidized [2Fe-2S]-[ferredoxin] + AMP + diphosphate. The enzyme catalyses [ThiS sulfur-carrier protein]-C-terminal Gly-Gly-AMP + S-sulfanyl-L-cysteinyl-[cysteine desulfurase] + AH2 = [ThiS sulfur-carrier protein]-C-terminal-Gly-aminoethanethioate + L-cysteinyl-[cysteine desulfurase] + A + AMP + 2 H(+). The protein operates within cofactor biosynthesis; thiamine diphosphate biosynthesis. Catalyzes the ATP-dependent transfer of a sulfur to tRNA to produce 4-thiouridine in position 8 of tRNAs, which functions as a near-UV photosensor. Also catalyzes the transfer of sulfur to the sulfur carrier protein ThiS, forming ThiS-thiocarboxylate. This is a step in the synthesis of thiazole, in the thiamine biosynthesis pathway. The sulfur is donated as persulfide by IscS. This Aeromonas hydrophila subsp. hydrophila (strain ATCC 7966 / DSM 30187 / BCRC 13018 / CCUG 14551 / JCM 1027 / KCTC 2358 / NCIMB 9240 / NCTC 8049) protein is tRNA sulfurtransferase.